The sequence spans 111 residues: Small ribosomal subunit protein bS16 (111 aa).

Belongs to the bacterial ribosomal protein bS16 family.

The sequence is that of Small ribosomal subunit protein bS16 from Rickettsia typhi (strain ATCC VR-144 / Wilmington).